A 421-amino-acid chain; its full sequence is F-box only protein 5 (421 aa).

Serine 85 bears the Phosphoserine mark. The segment at 114 to 219 (ELEASRLYED…IGKKMGLEHL (106 aa)) is interaction with EVI5. Residues 223–273 (AELSRRGFVHLLANILTKLSGMDLVNLSKVSRIWKKILENNKGAFQLYSKT) form the F-box domain. Residues 236-313 (NILTKLSGMD…KSSTWAPPKK (78 aa)) are sufficient for interaction with RPS6KA2; Prevents association of CDC20 with RPS6KA2. A requires for efficient binding to CDC20 region spans residues 236-383 (NILTKLSGMD…SCQFEYCTKC (148 aa)). An inhibits APC ubiquitin ligase activity region spans residues 280 to 421 (SSKLSLHATT…KKSKKNLQRL (142 aa)). Positions 296–299 (RAAL) are competitively blocks access of APC substrates to the D-box coreceptor formed by FZR1 and ANAPC10. The ZBR-type zinc-finger motif lies at 348–396 (SLKACVRCNFPAKYDHYLERAVCKRESCQFEYCTKCLCAYHNNKDCLNG). 8 residues coordinate Zn(2+): cysteine 352, cysteine 355, cysteine 370, cysteine 375, cysteine 380, cysteine 383, histidine 388, and cysteine 393. An allows a rapid multiple mono-ubiquitination of the APC substrate, but strongly inhibits the slow ubiquitin chain elongation catalyzed by UBCH10 region spans residues 352 to 394 (CVRCNFPAKYDHYLERAVCKRESCQFEYCTKCLCAYHNNKDCL). The segment at 411–421 (TKKSKKNLQRL) is sufficient to suppress UBE2S activity; essential for interaction with UBE2S; competitively inhibits the rapide ubiquitin chain elongation by UBE2D1 which blocks UBE2D1 with APC; indispensable for recruitment and position of FBXO5 to the catalytic site of APC; abrogates the inhibition of ubiquitin chain assembly primarily catalyzed by UBE2S; inhibits the ubiquitination by either UBE2C or UBE2D1.

In terms of assembly, part of a SCF (SKP1-cullin-F-box) protein ligase complex. Interacts with BTRC; mediates proteolysis by the SCF ubiquitin ligase complex leading to activation of APC in late mitosis and subsequent mitotic progression. Interacts with FZR1/CDH1 and the N-terminal substrate-binding domain of CDC20; prevents APC activation. Also interacts with EVI5 which blocks its phosphorylation by PLK1 and prevents its subsequent binding to BTRC and degradation. Interacts simultaneously with anaphase promoting complex (APC), through at least ANAPC2, CDC23, CDC27, the APC substrate GMNN and the APC activator FZR1. Interacts with UBE2S; interferes with the activity of UBE2S mainly by disrupting the dynamic electrostatic association between the C-terminal tail of UBE2S and ANAPC2. Interacts with RPS6KA2; cooperates to induce the metaphase arrest of early blastomeres; increases and stabilizes interaction of FBXO5 with CDC20. Post-translationally, phosphorylation by CDK2 and subsequently by PLK1 triggers degradation during early mitosis through ubiquitin-mediated proteolysis by the SCF ubiquitin ligase complex containing the F-box protein BTRC. This degradation is necessary for the activation of APC in late mitosis and subsequent mitotic progression. Phosphorylated by RPS6KA2; increases and stabilizes interaction with CDC20. In terms of processing, ubiquitinated by the SCF(BTRC) complex following phosphorylation by PLK1. Undergoes both 'Lys-11' and 'Lys-48'-linked polyubiquitination by APC-FZR1 complex leading to degradation during G1 phase by the proteasome. Degraded through the SCF(BTRC) complex; degradation occurs during oocyte maturation, between germinal vesicle breakdown (GVBD) and meiosis I, and is required for the meiosis I-meiosis II transition. As to expression, expressed in oocytes and granulosa cells. Expressed in proliferating cells compartments in hair follicle and skin epidermis, spermatogonia, and intestinal crypts.

The protein localises to the nucleus. Its subcellular location is the cytoplasm. The protein resides in the cytoskeleton. It is found in the spindle. Its pathway is protein modification; protein ubiquitination. Regulator of APC activity during mitotic and meiotic cell cycle. During mitotic cell cycle plays a role as both substrate and inhibitor of APC-FZR1 complex. During G1 phase, plays a role as substrate of APC-FZR1 complex E3 ligase. Then switches as an inhibitor of APC-FZR1 complex during S and G2 leading to cell-cycle commitment. As APC inhibitor, prevents the degradation of APC substrates at multiple levels: by interacting with APC and blocking access of APC substrates to the D-box co-receptor, formed by FZR1 and ANAPC10; by suppressing ubiquitin ligation and chain elongation by APC by preventing the UBE2C and UBE2S activities. Plays a role in genome integrity preservation by coordinating DNA replication with mitosis through APC inhibition in interphase to stabilize CCNA2 and GMNN in order to promote mitosis and prevent rereplication and DNA damage-induced cellular senescence. During oocyte maturation, plays a role in meiosis through inactivation of APC-FZR1 complex. Inhibits APC through RPS6KA2 interaction that increases FBXO5 affiniy for CDC20 leading to the metaphase arrest of the second meiotic division before fertilization. Controls entry into the first meiotic division through inactivation of APC-FZR1 complex. Promotes migration and osteogenic differentiation of mesenchymal stem cells. This Mus musculus (Mouse) protein is F-box only protein 5.